A 43-amino-acid polypeptide reads, in one-letter code: Protein PsbN (43 aa).

A helical transmembrane segment spans residues 5–27 (TVLSIFISSLLLGITGYSIYTAF).

This sequence belongs to the PsbN family.

The protein resides in the plastid. It is found in the chloroplast thylakoid membrane. Functionally, may play a role in photosystem I and II biogenesis. The protein is Protein PsbN of Porphyra purpurea (Red seaweed).